The sequence spans 414 residues: 2,3-diketo-5-methylthiopentyl-1-phosphate enolase (414 aa).

Lysine 99 (proton acceptor) is an active-site residue. Substrate-binding positions include lysine 148, 174–177 (KDDE), histidine 265, glycine 338, and 360–361 (GG). 3 residues coordinate Mg(2+): lysine 174, aspartate 176, and glutamate 177. Lysine 174 is modified (N6-carboxylysine).

This sequence belongs to the RuBisCO large chain family. Type IV subfamily. As to quaternary structure, homodimer. Requires Mg(2+) as cofactor.

It carries out the reaction 5-methylsulfanyl-2,3-dioxopentyl phosphate = 2-hydroxy-5-methylsulfanyl-3-oxopent-1-enyl phosphate. It participates in amino-acid biosynthesis; L-methionine biosynthesis via salvage pathway; L-methionine from S-methyl-5-thio-alpha-D-ribose 1-phosphate: step 3/6. Catalyzes the enolization of 2,3-diketo-5-methylthiopentyl-1-phosphate (DK-MTP-1-P) into 2-hydroxy-3-keto-5-methylthiopentenyl-1-phosphate (HK-MTPenyl-1-P). The protein is 2,3-diketo-5-methylthiopentyl-1-phosphate enolase of Bacillus cereus (strain AH820).